Consider the following 313-residue polypeptide: Ribonuclease HIII (313 aa).

The segment at 62–88 is disordered; the sequence is AERWTADAETPAPKKPASKKSIPSVYQ. An RNase H type-2 domain is found at 96–312; it reads MSVIGSDEVG…TQKAKRIASK (217 aa). Residues Asp102, Glu103, and Asp207 each coordinate a divalent metal cation.

It belongs to the RNase HII family. RnhC subfamily. Requires Mn(2+) as cofactor. Mg(2+) serves as cofactor.

The protein resides in the cytoplasm. The catalysed reaction is Endonucleolytic cleavage to 5'-phosphomonoester.. Functionally, endonuclease that specifically degrades the RNA of RNA-DNA hybrids. The chain is Ribonuclease HIII from Bacillus licheniformis (strain ATCC 14580 / DSM 13 / JCM 2505 / CCUG 7422 / NBRC 12200 / NCIMB 9375 / NCTC 10341 / NRRL NRS-1264 / Gibson 46).